We begin with the raw amino-acid sequence, 305 residues long: Ornithine carbamoyltransferase (305 aa).

Carbamoyl phosphate contacts are provided by residues 50-53 (STRT), Gln77, Arg101, and 128-131 (HPCQ). L-ornithine-binding positions include Asn159, Asp222, and 226–227 (SM). Residues 262 to 263 (CL) and Arg290 each bind carbamoyl phosphate.

This sequence belongs to the aspartate/ornithine carbamoyltransferase superfamily. OTCase family.

The protein localises to the cytoplasm. It catalyses the reaction carbamoyl phosphate + L-ornithine = L-citrulline + phosphate + H(+). The protein operates within amino-acid biosynthesis; L-arginine biosynthesis; L-arginine from L-ornithine and carbamoyl phosphate: step 1/3. In terms of biological role, reversibly catalyzes the transfer of the carbamoyl group from carbamoyl phosphate (CP) to the N(epsilon) atom of ornithine (ORN) to produce L-citrulline. This Synechococcus elongatus (strain ATCC 33912 / PCC 7942 / FACHB-805) (Anacystis nidulans R2) protein is Ornithine carbamoyltransferase.